A 121-amino-acid polypeptide reads, in one-letter code: Ig heavy chain V region MPC 11 (121 aa).

The Ig-like domain maps to Glu1 to Gly112.

The polypeptide is Ig heavy chain V region MPC 11 (Mus musculus (Mouse)).